Consider the following 296-residue polypeptide: DNA-3-methyladenine glycosylase (296 aa).

Serine 110 is modified (phosphoserine). The Proton acceptor role is filled by aspartate 209.

It belongs to the alkylbase DNA glycosidase AlkA family.

It is found in the nucleus. It carries out the reaction Hydrolysis of alkylated DNA, releasing 3-methyladenine, 3-methylguanine, 7-methylguanine and 7-methyladenine.. Functionally, hydrolysis of the deoxyribose N-glycosidic bond to excise 3-methyladenine or 7-methyladenine from the damaged DNA polymer formed by alkylation lesions. This Saccharomyces cerevisiae (strain ATCC 204508 / S288c) (Baker's yeast) protein is DNA-3-methyladenine glycosylase (MAG1).